A 145-amino-acid polypeptide reads, in one-letter code: Protein FimA (145 aa).

This sequence belongs to the fimbrial protein family.

It is found in the fimbrium. In Bordetella pertussis, this protein is Protein FimA (fimA).